The primary structure comprises 400 residues: Exodeoxyribonuclease 7 large subunit (400 aa).

Belongs to the XseA family. In terms of assembly, heterooligomer composed of large and small subunits.

The protein resides in the cytoplasm. It catalyses the reaction Exonucleolytic cleavage in either 5'- to 3'- or 3'- to 5'-direction to yield nucleoside 5'-phosphates.. In terms of biological role, bidirectionally degrades single-stranded DNA into large acid-insoluble oligonucleotides, which are then degraded further into small acid-soluble oligonucleotides. This chain is Exodeoxyribonuclease 7 large subunit, found in Clostridium perfringens (strain SM101 / Type A).